The primary structure comprises 160 residues: Putative pre-16S rRNA nuclease (160 aa).

Belongs to the YqgF nuclease family.

The protein resides in the cytoplasm. Its function is as follows. Could be a nuclease involved in processing of the 5'-end of pre-16S rRNA. The chain is Putative pre-16S rRNA nuclease from Rhodopseudomonas palustris (strain BisB5).